Reading from the N-terminus, the 131-residue chain is MRNHVLAASISMLSLLAIMGDTDSKTDSSFLMDSQRCMRHHYVDSISHPLYKCSSKMVLLARCEGHCSQASRSEPLVSFSTVLKQPFRSSCHCCRPQTSKLKALRLRCSGGMRLTATYRYILSCHCEECSS.

The signal sequence occupies residues 1-24 (MRNHVLAASISMLSLLAIMGDTDS). Intrachain disulfides connect Cys37–Cys94, Cys53–Cys108, Cys63–Cys124, and Cys67–Cys126. The CTCK domain maps to 37 to 130 (CMRHHYVDSI…ILSCHCEECS (94 aa)).

As to quaternary structure, homodimer; disulfide-linked. Component of a complex, at least composed of TSPAN12, FZD4, LRP5/6 and norrin (NDP). Binds FZD4 with high affinity. Interacts with LRP6 (via Beta-propellers 1 and 2). In terms of tissue distribution, expressed in the outer nuclear, inner nuclear and ganglion cell layers of the retina.

Its subcellular location is the secreted. Functionally, activates the canonical Wnt signaling pathway through FZD4 and LRP5 coreceptor. Plays a central role in retinal vascularization by acting as a ligand for FZD4 that signals via stabilizing beta-catenin (CTNNB1) and activating LEF/TCF-mediated transcriptional programs. Acts in concert with TSPAN12 to activate FZD4 independently of the Wnt-dependent activation of FZD4, suggesting the existence of a Wnt-independent signaling that also promote accumulation the beta-catenin (CTNNB1). May be involved in a pathway that regulates neural cell differentiation and proliferation. Possible role in neuroectodermal cell-cell interaction. This Mus musculus (Mouse) protein is Norrin (Ndp).